We begin with the raw amino-acid sequence, 113 residues long: Hemerythrin (113 aa).

Histidine 25, histidine 54, glutamate 58, histidine 73, histidine 77, histidine 101, and aspartate 106 together coordinate Fe cation.

It belongs to the hemerythrin family. As to quaternary structure, homooctamer.

Functionally, hemerythrin is a respiratory protein in blood cells of certain marine worms. The oxygen-binding site in each chain contains two iron atoms. In Themiste dyscrita (Peanut worm), this protein is Hemerythrin.